The primary structure comprises 135 residues: MARVTVEDCIDKVENRFELVLLASHRARLVSQGAPITVDRDNDKNPVVALREIADETLSPGDLKEDLIHSLQKHVEVDEPEPDPASLVQTEAAPAFAEAAEEEDQPEALTFDRMSEEELLAGIEGLVPPEKSDDY.

The protein belongs to the RNA polymerase subunit omega family. The RNAP catalytic core consists of 2 alpha, 1 beta, 1 beta' and 1 omega subunit. When a sigma factor is associated with the core the holoenzyme is formed, which can initiate transcription.

The enzyme catalyses RNA(n) + a ribonucleoside 5'-triphosphate = RNA(n+1) + diphosphate. Functionally, promotes RNA polymerase assembly. Latches the N- and C-terminal regions of the beta' subunit thereby facilitating its interaction with the beta and alpha subunits. In Rhizobium meliloti (strain 1021) (Ensifer meliloti), this protein is DNA-directed RNA polymerase subunit omega.